Here is a 438-residue protein sequence, read N- to C-terminus: Serine hydroxymethyltransferase (438 aa).

(6S)-5,6,7,8-tetrahydrofolate contacts are provided by residues Leu119 and 123–125; that span reads GHL. Lys228 carries the N6-(pyridoxal phosphate)lysine modification. 370 to 372 contacts (6S)-5,6,7,8-tetrahydrofolate; the sequence is SPF.

This sequence belongs to the SHMT family. As to quaternary structure, homodimer. The cofactor is pyridoxal 5'-phosphate.

It localises to the cytoplasm. It carries out the reaction (6R)-5,10-methylene-5,6,7,8-tetrahydrofolate + glycine + H2O = (6S)-5,6,7,8-tetrahydrofolate + L-serine. It participates in one-carbon metabolism; tetrahydrofolate interconversion. The protein operates within amino-acid biosynthesis; glycine biosynthesis; glycine from L-serine: step 1/1. Functionally, catalyzes the reversible interconversion of serine and glycine with tetrahydrofolate (THF) serving as the one-carbon carrier. This reaction serves as the major source of one-carbon groups required for the biosynthesis of purines, thymidylate, methionine, and other important biomolecules. Also exhibits THF-independent aldolase activity toward beta-hydroxyamino acids, producing glycine and aldehydes, via a retro-aldol mechanism. The protein is Serine hydroxymethyltransferase of Chlorobium chlorochromatii (strain CaD3).